The following is a 379-amino-acid chain: Cinnamyl alcohol dehydrogenase 7 (379 aa).

Positions 1-13 (MAPTTTATAAAEQ) are enriched in low complexity. The tract at residues 1–21 (MAPTTTATAAAEQAPPPQHTR) is disordered. Residue Cys-60 coordinates Zn(2+). Residue Ser-62 coordinates NADP(+). Residues His-82, Glu-83, Cys-113, Cys-116, Cys-119, Cys-127, and Cys-185 each coordinate Zn(2+). NADP(+)-binding positions include Thr-189, 210–215 (GLGGLG), 233–238 (STSPVK), Thr-273, Gly-297, and 320–322 (SCM).

It belongs to the zinc-containing alcohol dehydrogenase family. Homodimer. It depends on Zn(2+) as a cofactor. In terms of tissue distribution, expressed in roots, first internodes and panicles. Expressed in the vascular bundles and sclerenchyma cells below the epidermis in leaves and stems.

The enzyme catalyses (E)-cinnamyl alcohol + NADP(+) = (E)-cinnamaldehyde + NADPH + H(+). It carries out the reaction (E)-coniferol + NADP(+) = (E)-coniferaldehyde + NADPH + H(+). The catalysed reaction is (E)-sinapyl alcohol + NADP(+) = (E)-sinapaldehyde + NADPH + H(+). It catalyses the reaction (E)-4-coumaroyl alcohol + NADP(+) = (E)-4-coumaraldehyde + NADPH + H(+). The enzyme catalyses (E)-caffeyl alcohol + NADP(+) = (E)-caffeyl aldehyde + NADPH + H(+). Its pathway is aromatic compound metabolism; phenylpropanoid biosynthesis. Its function is as follows. Involved in lignin biosynthesis. May catalyze the final step specific for the production of lignin monomers, like coniferyl alcohol, sinapyl alcohol and 4-coumaryl alcohol. The sequence is that of Cinnamyl alcohol dehydrogenase 7 from Oryza sativa subsp. japonica (Rice).